We begin with the raw amino-acid sequence, 290 residues long: CMRF35-like molecule 1 (290 aa).

The signal sequence occupies residues 1–19; that stretch reads MPLLTLYLLLFWLSGYSIV. The region spanning 20–126 is the Ig-like V-type domain; it reads TQITGPTTVN…LGVTVQVTID (107 aa). Over 20–156 the chain is Extracellular; that stretch reads TQITGPTTVN…DNRHKLLKLS (137 aa). 2 disulfide bridges follow: Cys-40/Cys-108 and Cys-54/Cys-62. Residue Asn-88 is glycosylated (N-linked (GlcNAc...) asparagine). A helical transmembrane segment spans residues 157 to 177; it reads VLLPLIFTILLLLLVAASLLA. At 178 to 290 the chain is on the cytoplasmic side; it reads WRMMKYQQKA…PTEYSTISRP (113 aa). The segment at 267–290 is disordered; that stretch reads GHLSSHLPGRGPEEPTEYSTISRP.

The protein belongs to the CD300 family. As to quaternary structure, interacts with PTPN6/SHP-1 in a tyrosine phosphorylation dependent manner. Interacts with IL4R. In terms of processing, phosphorylated on tyrosine. Highly expressed in spleen, peripheral blood leukocyte and monocyte, and lung. Weakly expressed in thymus, heart, brain, placenta, liver, skeletal muscle, kidney, pancreas, prostate, testis, ovary, small intestine or colon. Expressed selectively in monocytes and monocyte-related cells.

It localises to the cell membrane. Its function is as follows. Acts as an inhibitory receptor for myeloid cells and mast cells. Positively regulates the phagocytosis of apoptotic cells (efferocytosis) via phosphatidylserine (PS) recognition; recognizes and binds PS as a ligand which is expressed on the surface of apoptotic cells. Plays an important role in the maintenance of immune homeostasis, by promoting macrophage-mediated efferocytosis and by inhibiting dendritic cell-mediated efferocytosis. Negatively regulates Fc epsilon receptor-dependent mast cell activation and allergic responses via binding to ceramide and sphingomyelin which act as ligands. May act as a coreceptor for interleukin 4 (IL-4). Associates with and regulates IL-4 receptor alpha-mediated responses by augmenting IL-4- and IL-13-induced signaling. Negatively regulates the Toll-like receptor (TLR) signaling mediated by MYD88 and TRIF through activation of PTPN6/SHP-1 and PTPN11/SHP-2. Inhibits osteoclast formation. Induces macrophage cell death upon engagement. The sequence is that of CMRF35-like molecule 1 (CD300LF) from Homo sapiens (Human).